The primary structure comprises 343 residues: Biotin synthase (343 aa).

The Radical SAM core domain maps to 36–254 (NTIQISTLLS…IAVARIMMPK (219 aa)). Residues cysteine 51, cysteine 55, and cysteine 58 each coordinate [4Fe-4S] cluster. Residues cysteine 95, cysteine 126, cysteine 186, and arginine 258 each contribute to the [2Fe-2S] cluster site.

It belongs to the radical SAM superfamily. Biotin synthase family. In terms of assembly, homodimer. [4Fe-4S] cluster serves as cofactor. It depends on [2Fe-2S] cluster as a cofactor.

It catalyses the reaction (4R,5S)-dethiobiotin + (sulfur carrier)-SH + 2 reduced [2Fe-2S]-[ferredoxin] + 2 S-adenosyl-L-methionine = (sulfur carrier)-H + biotin + 2 5'-deoxyadenosine + 2 L-methionine + 2 oxidized [2Fe-2S]-[ferredoxin]. It participates in cofactor biosynthesis; biotin biosynthesis; biotin from 7,8-diaminononanoate: step 2/2. Catalyzes the conversion of dethiobiotin (DTB) to biotin by the insertion of a sulfur atom into dethiobiotin via a radical-based mechanism. This Buchnera aphidicola subsp. Acyrthosiphon pisum (strain 5A) protein is Biotin synthase.